A 157-amino-acid polypeptide reads, in one-letter code: Mini-ribonuclease 3 (157 aa).

Aspartate 18 is an active-site residue. The tract at residues 126-157 is disordered; it reads EEDEGKGKGETAKEEESITDALSPAEQSEIDC. Over residues 130–141 the composition is skewed to basic and acidic residues; sequence GKGKGETAKEEE.

The protein belongs to the MrnC RNase family. Homodimer. Mg(2+) serves as cofactor.

It localises to the cytoplasm. Functionally, involved in correct processing of both the 5' and 3' ends of 23S rRNA precursor. Processes 30S rRNA precursor transcript even in absence of ribonuclease 3 (Rnc); Rnc processes 30S rRNA into smaller rRNA precursors. The sequence is that of Mini-ribonuclease 3 from Desulfitobacterium hafniense (strain Y51).